A 150-amino-acid chain; its full sequence is Large ribosomal subunit protein eL19 (150 aa).

The interval 56–89 (KGQSRARARAFQEARKKGRHRGPGSKKGKKTARM) is disordered. Positions 71 to 89 (KKGRHRGPGSKKGKKTARM) are enriched in basic residues.

The protein belongs to the eukaryotic ribosomal protein eL19 family. As to quaternary structure, part of the 50S ribosomal subunit.

In terms of biological role, binds to the 23S rRNA. In Thermococcus kodakarensis (strain ATCC BAA-918 / JCM 12380 / KOD1) (Pyrococcus kodakaraensis (strain KOD1)), this protein is Large ribosomal subunit protein eL19.